The chain runs to 187 residues: Probable nicotinate-nucleotide adenylyltransferase (187 aa).

The protein belongs to the NadD family.

The enzyme catalyses nicotinate beta-D-ribonucleotide + ATP + H(+) = deamido-NAD(+) + diphosphate. The protein operates within cofactor biosynthesis; NAD(+) biosynthesis; deamido-NAD(+) from nicotinate D-ribonucleotide: step 1/1. Its function is as follows. Catalyzes the reversible adenylation of nicotinate mononucleotide (NaMN) to nicotinic acid adenine dinucleotide (NaAD). This chain is Probable nicotinate-nucleotide adenylyltransferase, found in Anaeromyxobacter dehalogenans (strain 2CP-C).